Here is a 239-residue protein sequence, read N- to C-terminus: Ribose-5-phosphate isomerase A (239 aa).

Substrate-binding positions include 40–43 (SGST), 96–99 (DGAD), and 110–113 (KGGG). The Proton acceptor role is filled by Glu119. Lys137 serves as a coordination point for substrate.

The protein belongs to the ribose 5-phosphate isomerase family. As to quaternary structure, homodimer.

It carries out the reaction aldehydo-D-ribose 5-phosphate = D-ribulose 5-phosphate. The protein operates within carbohydrate degradation; pentose phosphate pathway; D-ribose 5-phosphate from D-ribulose 5-phosphate (non-oxidative stage): step 1/1. Catalyzes the reversible conversion of ribose-5-phosphate to ribulose 5-phosphate. This is Ribose-5-phosphate isomerase A from Methanococcus maripaludis (strain C6 / ATCC BAA-1332).